The sequence spans 181 residues: Small ribosomal subunit protein uS4 (181 aa).

Residues 104–172 (RRLQTIVYKK…SRPPVMSQQE (69 aa)) form the S4 RNA-binding domain.

The protein belongs to the universal ribosomal protein uS4 family. In terms of assembly, part of the 30S ribosomal subunit. Contacts protein S5. The interaction surface between S4 and S5 is involved in control of translational fidelity.

Its function is as follows. One of the primary rRNA binding proteins, it binds directly to 16S rRNA where it nucleates assembly of the body of the 30S subunit. With S5 and S12 plays an important role in translational accuracy. The chain is Small ribosomal subunit protein uS4 from Saccharolobus solfataricus (strain ATCC 35092 / DSM 1617 / JCM 11322 / P2) (Sulfolobus solfataricus).